Here is a 472-residue protein sequence, read N- to C-terminus: Carboxypeptidase Q (472 aa).

The first 20 residues, 1-20, serve as a signal peptide directing secretion; that stretch reads MKFLIFAFFGGVHLLSLCSG. A propeptide spanning residues 21–44 is cleaved from the precursor; the sequence is KAIYKNGISKRTFEEIKEEIASYG. N-linked (GlcNAc...) asparagine glycosylation is found at asparagine 61 and asparagine 179. Zn(2+) contacts are provided by histidine 290 and aspartate 302. Glutamate 336 serves as the catalytic Nucleophile. Glutamate 337 contributes to the Zn(2+) binding site. N-linked (GlcNAc...) asparagine glycosylation is found at asparagine 353 and asparagine 356. Aspartate 364 provides a ligand contact to Zn(2+). Residue asparagine 396 is glycosylated (N-linked (GlcNAc...) asparagine). A Zn(2+)-binding site is contributed by histidine 434.

It belongs to the peptidase M28 family. As to quaternary structure, homodimer. The monomeric form is inactive while the homodimer is active. N-glycosylated. The secreted form is modified by hybrid or complex type oligosaccharide chains.

The protein resides in the endoplasmic reticulum. Its subcellular location is the golgi apparatus. It localises to the lysosome. It is found in the secreted. Functionally, carboxypeptidase that may play an important role in the hydrolysis of circulating peptides. Catalyzes the hydrolysis of dipeptides with unsubstituted terminals into amino acids. May play a role in the liberation of thyroxine hormone from its thyroglobulin (Tg) precursor. The protein is Carboxypeptidase Q (CPQ) of Pongo abelii (Sumatran orangutan).